The primary structure comprises 345 residues: S-adenosylmethionine:tRNA ribosyltransferase-isomerase (345 aa).

It belongs to the QueA family. As to quaternary structure, monomer.

Its subcellular location is the cytoplasm. It carries out the reaction 7-aminomethyl-7-carbaguanosine(34) in tRNA + S-adenosyl-L-methionine = epoxyqueuosine(34) in tRNA + adenine + L-methionine + 2 H(+). Its pathway is tRNA modification; tRNA-queuosine biosynthesis. Its function is as follows. Transfers and isomerizes the ribose moiety from AdoMet to the 7-aminomethyl group of 7-deazaguanine (preQ1-tRNA) to give epoxyqueuosine (oQ-tRNA). This is S-adenosylmethionine:tRNA ribosyltransferase-isomerase from Helicobacter pylori (strain HPAG1).